A 478-amino-acid chain; its full sequence is Protein nucleotidyltransferase YdiU (478 aa).

Gly-84, Gly-86, Arg-87, Lys-107, Asp-119, Gly-120, Arg-170, and Arg-177 together coordinate ATP. The Proton acceptor role is filled by Asp-246. The Mg(2+) site is built by Asn-247 and Asp-256. Residue Asp-256 participates in ATP binding.

The protein belongs to the SELO family. It depends on Mg(2+) as a cofactor. Mn(2+) is required as a cofactor.

It carries out the reaction L-seryl-[protein] + ATP = 3-O-(5'-adenylyl)-L-seryl-[protein] + diphosphate. The catalysed reaction is L-threonyl-[protein] + ATP = 3-O-(5'-adenylyl)-L-threonyl-[protein] + diphosphate. The enzyme catalyses L-tyrosyl-[protein] + ATP = O-(5'-adenylyl)-L-tyrosyl-[protein] + diphosphate. It catalyses the reaction L-histidyl-[protein] + UTP = N(tele)-(5'-uridylyl)-L-histidyl-[protein] + diphosphate. It carries out the reaction L-seryl-[protein] + UTP = O-(5'-uridylyl)-L-seryl-[protein] + diphosphate. The catalysed reaction is L-tyrosyl-[protein] + UTP = O-(5'-uridylyl)-L-tyrosyl-[protein] + diphosphate. Its function is as follows. Nucleotidyltransferase involved in the post-translational modification of proteins. It can catalyze the addition of adenosine monophosphate (AMP) or uridine monophosphate (UMP) to a protein, resulting in modifications known as AMPylation and UMPylation. This is Protein nucleotidyltransferase YdiU from Escherichia coli O17:K52:H18 (strain UMN026 / ExPEC).